Consider the following 2570-residue polypeptide: Highly reducing polyketide synthase tstA (2570 aa).

One can recognise a Ketosynthase family 3 (KS3) domain in the interval 16 to 443 (AMPIAVVGIG…GANAHVVLEN (428 aa)). Residues Cys-191, His-326, and His-366 each act as for beta-ketoacyl synthase activity in the active site. The interval 458 to 478 (HTRKSATESSGTSTPSNPGPH) is disordered. Over residues 464-478 (TESSGTSTPSNPGPH) the composition is skewed to low complexity. The Malonyl-CoA:ACP transacylase (MAT) domain maps to 567 to 898 (FVFTGQGAQW…YSALVRNKNA (332 aa)). An N-terminal hotdog fold region spans residues 965–1103 (TDLLGVLERN…GLVSVVAPQK (139 aa)). In terms of domain architecture, PKS/mFAS DH spans 965–1293 (TDLLGVLERN…CATLAREGAD (329 aa)). Residue His-997 is the Proton acceptor; for dehydratase activity of the active site. The interval 1133-1293 (RRNINVPQFY…CATLAREGAD (161 aa)) is C-terminal hotdog fold. The active-site Proton donor; for dehydratase activity is the Asp-1198. A methyltransferase (CMeT) domain region spans residues 1343-1645 (LERAAYYMLK…IATSINSNNY (303 aa)). One can recognise an Enoyl reductase (ER) domain in the interval 1866-2178 (GLLDSIFWTD…TGGHMGKLVG (313 aa)). One can recognise a Ketoreductase (KR) domain in the interval 2202-2379 (ASYVLIGGLG…ATTIDLGAIS (178 aa)). Positions 2482-2559 (DASELILGAL…HLATKIAQRS (78 aa)) constitute a Carrier domain. Ser-2519 carries the O-(pantetheine 4'-phosphoryl)serine modification.

The cofactor is pantetheine 4'-phosphate.

It functions in the pathway secondary metabolite biosynthesis. Functionally, highly reducing polyketide synthase; part of the gene cluster that mediates the biosynthesis of the antihypercholesterolemic agents phomoidrides which are dimeric anhydrides. The pathway begins with the highly reducing polyketide synthase tstA that catalyzes the formation of a C12-fatty acyl-ACP, starting from one acetate and 5 malonate units. The hydrolase tstM is involved in the release of the C12-fatty acyl chain from tstA. The alkylcitrate synthase (ACS) tstJ and the alkylcitrate dehydratase (ACDH) tstI then give rise to decarboxylated monomeric anhydrides by coupling the C12-fatty acyl chain with oxalacetic acid. The cyclase tstC is responsible for the dimerization of the monomeric anhydrides which leads to the production of prephomoidride that contains the characteristic bicyclo[4.3.1]deca-1,6-diene system of phomoidrides. Iterative oxidation catalyzed by the alpha-ketoglutarate-dependent dioxygenase tstK produced then phomoidride A. Finally, the methyltransferase tstE converts phomoidride A to phomoidride B via an acetalization reaction. The phosphatidylethanolamine-binding protein tstB and tstN are not essential for dimerization and their functions have still to be determined. This chain is Highly reducing polyketide synthase tstA, found in Talaromyces stipitatus (strain ATCC 10500 / CBS 375.48 / QM 6759 / NRRL 1006) (Penicillium stipitatum).